The sequence spans 121 residues: MNAYPVSRLALDAGVSVHIVRDYLLRGLLRPVACTPGGYGLFDDAALQRLCFVRAAFEAGIGLDALARLCRALDAADGDEAAAQLALLRQFVERRREALADLEVQLATLPTEPAQHAESLP.

The HTH merR-type domain maps to 3–72 (AYPVSRLALD…LDALARLCRA (70 aa)). The H-T-H motif DNA-binding region spans 6–25 (VSRLALDAGVSVHIVRDYLL).

The protein is HTH-type transcriptional regulator MerD (merD) of Pseudomonas aeruginosa.